A 330-amino-acid chain; its full sequence is Anthranilate phosphoribosyltransferase (330 aa).

5-phospho-alpha-D-ribose 1-diphosphate is bound by residues Gly-79, 82–83 (GD), Thr-87, 89–92 (NIST), 107–115 (KHGNYGVSS), and Ser-119. Gly-79 is a binding site for anthranilate. Ser-91 lines the Mg(2+) pocket. Asn-110 lines the anthranilate pocket. Arg-165 serves as a coordination point for anthranilate. Asp-223 and Glu-224 together coordinate Mg(2+).

This sequence belongs to the anthranilate phosphoribosyltransferase family. As to quaternary structure, homodimer. Mg(2+) serves as cofactor.

The catalysed reaction is N-(5-phospho-beta-D-ribosyl)anthranilate + diphosphate = 5-phospho-alpha-D-ribose 1-diphosphate + anthranilate. Its pathway is amino-acid biosynthesis; L-tryptophan biosynthesis; L-tryptophan from chorismate: step 2/5. Catalyzes the transfer of the phosphoribosyl group of 5-phosphorylribose-1-pyrophosphate (PRPP) to anthranilate to yield N-(5'-phosphoribosyl)-anthranilate (PRA). The protein is Anthranilate phosphoribosyltransferase of Flavobacterium psychrophilum (strain ATCC 49511 / DSM 21280 / CIP 103535 / JIP02/86).